The sequence spans 731 residues: T-cell activation Rho GTPase-activating protein (731 aa).

Positions 88–277 constitute a Rho-GAP domain; the sequence is QPLSIICGDS…FLIDNCFEIF (190 aa). Disordered regions lie at residues 288–421, 464–507, and 641–662; these read TSDD…AEDP, SLDA…IKKH, and HHVEDSRHRGSKEPLPGHGLSP. Residues 299–311 show a composition bias toward polar residues; that stretch reads SDVSTLQNDSAYD. Residues 319 to 329 are compositionally biased toward low complexity; that stretch reads SNSSSGISSPS. Residues 380-399 show a composition bias toward polar residues; sequence SMPSSQECLESRVTNQTLTK. The residue at position 400 (Ser-400) is a Phosphoserine. Residues 464–480 are compositionally biased toward low complexity; it reads SLDASSDSSPVASPSSP. Basic and acidic residues-rich tracts occupy residues 494 to 503 and 641 to 652; these read KTEKGKPSRE and HHVEDSRHRGSK.

May function as a GTPase-activating protein and may play important roles during T-cell activation. This chain is T-cell activation Rho GTPase-activating protein (TAGAP), found in Homo sapiens (Human).